Consider the following 108-residue polypeptide: Large ribosomal subunit protein bL21c (108 aa).

The protein belongs to the bacterial ribosomal protein bL21 family. In terms of assembly, part of the 50S ribosomal subunit.

Its subcellular location is the plastid. It localises to the chloroplast. This protein binds to 23S rRNA. The sequence is that of Large ribosomal subunit protein bL21c from Cyanidium caldarium (Red alga).